Consider the following 584-residue polypeptide: MSHQPLSCLTEKGDSPCETPGNGPSNMVHPSLDTFTPEELLQQMKELLVENHQLKEAMKLNNQAMKGRFEELSAWTEKQKEERLLFEMQSKEVKERLKALTHENERLKEELGKFKEKSEKPLEDLTGGYRYPRALEEEVEKLKTQVEQEVEHLKIQVMRLRAEKADLLGIVSELQLKLNSGGSSEDSFVEIRMTEGETEGAMKEMKNCPTPTRTDPISLSNCTEDARSCAEFEELTVSQLLLCLREGNQKVERLEVALREAKERISDFEKKANGHSSTEKQTARRADREKEDKGQESVGSEVETLSIQVTSLFKELQEAHTKLSEAELMKKRLQEKCQALERKNSATPSELNEKQELVYSNKKLELQVESMRSEIKMEQAKTEEEKSRLATLQATHNKLLQEHNKALKTIEELTKQQAEKVDKMLLQELSEKLELAEQALASKQLQMDEMKQTLAKQEEDLETMAVLRAQMEVYCSDFHAERAAREKIHEEKEQLALQLAILLKENNDIEEGGSRQSLMEMQCRHGARTSDSDQQTYLFQRGAEDRSWQHGQQPRSIPIHSCPKCGEVLPDIDTLQIHVMDCII.

The segment at 1 to 32 (MSHQPLSCLTEKGDSPCETPGNGPSNMVHPSL) is disordered. Residues 38 to 180 (EELLQQMKEL…VSELQLKLNS (143 aa)) are a coiled coil. The tract at residues 58-219 (MKLNNQAMKG…TPTRTDPISL (162 aa)) is interaction with Rab8. Positions 186–191 (DSFVEI) match the LIR motif. Ser-187 is modified (phosphoserine). Coiled-coil stretches lie at residues 243–278 (CLREGNQKVERLEVALREAKERISDFEKKANGHSST) and 307–511 (IQVT…DIEE). Over residues 267–295 (DFEKKANGHSSTEKQTARRADREKEDKGQ) the composition is skewed to basic and acidic residues. The segment at 267-302 (DFEKKANGHSSTEKQTARRADREKEDKGQESVGSEV) is disordered. Ser-345 bears the Phosphoserine mark. An interaction with HD region spans residues 414–584 (TKQQAEKVDK…LQIHVMDCII (171 aa)). The segment at 415-524 (KQQAEKVDKM…RQSLMEMQCR (110 aa)) is interaction with MYO6. The UBAN motif lies at 477–482 (DFHAER). A Phosphoserine modification is found at Ser-530. Residues 554–584 (PRSIPIHSCPKCGEVLPDIDTLQIHVMDCII) form a CCHC NOA-type zinc finger. Positions 562, 565, 578, and 582 each coordinate Zn(2+).

As to quaternary structure, self-associates. Interacts with HD, GTF3A, TRAF3, TBK1 and MYO6. Interacts (via UBAN) with ubiquitinated TFRC. Interacts with active GTP-bound Rab8 (RAB8A and/or RAB8B). Interacts with TBC1D17. Binds to linear ubiquitin chains. Interacts with LC3 family members MAP1LC3A, MAP1LC3B, GABARAP, GABARAPL1 and GABARAPL2; OPTN phosphorylation increases the association (at least with MAP1LC3B). Interacts with RAB12; the interaction may be indirect. Interacts with TBK1; this interaction leads to the Golgi localization of TBK1 and its subsequent activation. Interacts with palmitoyltransferase ZDHHC17/HIP14; the interaction does not lead to palmitoylation of OPTN. Interacts with CYLD. Interacts with TOM1; the interaction is indirect and is mediated by MYO6, which acts as a bridge between TOM1 and OPTN. Interacts with USP12; the interaction is independent of USP12 deubiquitinase activity and may be involved in regulation of autophagic flux. Post-translationally, phosphorylated by TBK1, leading to restrict bacterial proliferation in case of infection. In terms of tissue distribution, in eye, it is expressed in anterior segment, retina, and optic nerve blood vessels (at protein level). Highly expressed in adult liver, heart and testis.

The protein localises to the cytoplasm. It localises to the perinuclear region. Its subcellular location is the golgi apparatus. The protein resides in the trans-Golgi network. It is found in the cytoplasmic vesicle. The protein localises to the autophagosome. It localises to the recycling endosome. Functionally, plays an important role in the maintenance of the Golgi complex, in membrane trafficking, in exocytosis, through its interaction with myosin VI and Rab8. Links myosin VI to the Golgi complex and plays an important role in Golgi ribbon formation. Plays a role in the activation of innate immune response during viral infection. Mechanistically, recruits TBK1 at the Golgi apparatus, promoting its trans-phosphorylation after RLR or TLR3 stimulation. In turn, activated TBK1 phosphorylates its downstream partner IRF3 to produce IFN-beta. Plays a neuroprotective role in the eye and optic nerve. May act by regulating membrane trafficking and cellular morphogenesis via a complex that contains Rab8 and huntingtin (HD). Mediates the interaction of Rab8 with the probable GTPase-activating protein TBC1D17 during Rab8-mediated endocytic trafficking, such as that of transferrin receptor (TFRC/TfR); regulates Rab8 recruitment to tubules emanating from the endocytic recycling compartment. Autophagy receptor that interacts directly with both the cargo to become degraded and an autophagy modifier of the MAP1 LC3 family; targets ubiquitin-coated bacteria (xenophagy), such as cytoplasmic Salmonella enterica, and appears to function in the same pathway as SQSTM1 and CALCOCO2/NDP52. The sequence is that of Optineurin (Optn) from Mus musculus (Mouse).